A 213-amino-acid polypeptide reads, in one-letter code: N-(5'-phosphoribosyl)anthranilate isomerase (213 aa).

This sequence belongs to the TrpF family.

The enzyme catalyses N-(5-phospho-beta-D-ribosyl)anthranilate = 1-(2-carboxyphenylamino)-1-deoxy-D-ribulose 5-phosphate. Its pathway is amino-acid biosynthesis; L-tryptophan biosynthesis; L-tryptophan from chorismate: step 3/5. This Rhodopseudomonas palustris (strain TIE-1) protein is N-(5'-phosphoribosyl)anthranilate isomerase.